The primary structure comprises 478 residues: Protein ZINC INDUCED FACILITATOR-LIKE 1 (478 aa).

The next 12 membrane-spanning stretches (helical) occupy residues 43-63 (IIVL…YFMI), 81-101 (FVGC…GLVA), 108-128 (PVIL…GLSL), 130-150 (FWMA…LGPI), 169-189 (AVST…GFLA), 208-228 (FPFF…TIVS), 280-300 (IIVY…FSLW), 317-337 (VGSV…SLYS), 346-367 (IIVT…PLIA), 378-398 (VTSA…GLFI), 415-435 (IAMT…GIIF), and 453-473 (VFFI…KPFL).

The protein belongs to the major facilitator superfamily. In terms of tissue distribution, predominantly expressed in roots and stomatal guard cells. Detected in anther stamen filaments and shoot apical meristem. In the mature portion of roots, restricted to the cortex. At the root tip, highly expressed in both the cortical and epidermal cell layers of the apical meristem and the transition zone, while absent from the quiescent center or the columella cells. Not detected in lateral root primordia.

It localises to the cell membrane. The protein resides in the vacuole membrane. Major facilitator superfamily (MFS) transporter probably involved in 2,4-dichlorophenoxyacetic acid (2,4-D) export. K(+) may be the physiological substrate of the transporter. Its function is as follows. Modulates root auxin-related processes. Involved in auxin efflux and acts as a positive regulator of shootward transport at the root apex. May mediate proton efflux from the vacuolar compartment. In terms of biological role, mediates drought stress tolerance by regulating stomatal closure. In Arabidopsis thaliana (Mouse-ear cress), this protein is Protein ZINC INDUCED FACILITATOR-LIKE 1 (ZIFL1).